A 240-amino-acid chain; its full sequence is UDP-2,3-diacylglucosamine hydrolase (240 aa).

5 residues coordinate Mn(2+): Asp-8, His-10, Asp-41, Asn-79, and His-114. 79–80 (NR) is a binding site for substrate. Residues Asp-122, Ser-160, Thr-164, Lys-167, and His-195 each contribute to the substrate site. Mn(2+)-binding residues include His-195 and His-197.

This sequence belongs to the LpxH family. It depends on Mn(2+) as a cofactor.

It is found in the cell inner membrane. The catalysed reaction is UDP-2-N,3-O-bis[(3R)-3-hydroxytetradecanoyl]-alpha-D-glucosamine + H2O = 2-N,3-O-bis[(3R)-3-hydroxytetradecanoyl]-alpha-D-glucosaminyl 1-phosphate + UMP + 2 H(+). It participates in glycolipid biosynthesis; lipid IV(A) biosynthesis; lipid IV(A) from (3R)-3-hydroxytetradecanoyl-[acyl-carrier-protein] and UDP-N-acetyl-alpha-D-glucosamine: step 4/6. Hydrolyzes the pyrophosphate bond of UDP-2,3-diacylglucosamine to yield 2,3-diacylglucosamine 1-phosphate (lipid X) and UMP by catalyzing the attack of water at the alpha-P atom. Involved in the biosynthesis of lipid A, a phosphorylated glycolipid that anchors the lipopolysaccharide to the outer membrane of the cell. In Pseudomonas aeruginosa (strain UCBPP-PA14), this protein is UDP-2,3-diacylglucosamine hydrolase.